A 135-amino-acid chain; its full sequence is MLSPKRTRFRKQHRGRLKGISSRGNRICFGRYALQTLEPAWITSRQIEAGRRAMSRNVRRGGKIWVRIFPDKPVTVRPAETRMGSGKGSPEYWVAVVKPGKILYEMGGVPENIARKAISIAASKMPIKTQFIISE.

The protein belongs to the universal ribosomal protein uL16 family. In terms of assembly, part of the 50S ribosomal subunit.

The protein resides in the plastid. It localises to the chloroplast. This Lepidium virginicum (Virginia pepperweed) protein is Large ribosomal subunit protein uL16c.